Reading from the N-terminus, the 868-residue chain is MGTTASTAQQTVSASAFESVHGIGTMEDQRSLSIHSFQTLGLHNSKAKSIITNKVAPVVITYNCREEFQIHDDLLKANYTVGRISDATLEHYLVQGKYFMVRDVYSKLDVLNTTASCGAPNFRQAKGGYAVFGMGQPSLGGFKLVLQKLQREGHKECVFFCVREEPVLFLRVESDFVPYTPRGKENLHENLHSLRRGLRVEDLELTIRKEIHDFAQLSEGVYYVYNDIERFRDEPHTVRVQGEEDIHVTEEVYRRPIFLLPTYRYHRLPLPVDGAPLEEQFDAFICFLRESSGLLLRDPSRPPPALLFSCQTGVGRTNLAMALGTLILHHHRGAAPKPDPPHPAKMPPRARFRVIQSFIEMVPKGQQMVEEVDSVIASCSEMHDMKEAIYESKKKLEGIGEDYQIQGNSTKEYFLQRTLQSLERYFYLIAFNYYLHEQYPLGFALSFSRWMCRHPELYRLQAIMNSSELTITGDLITKGTRVLVVDERFCPDVLSTVKEMSVANFRRVPKMPIYGTAQPSSKALGSVLRYLTDAKRKHSRILWVSLREEVVLEGNEQIYTLREPGSLDQLIPVPVSTPEQLEKLESTLKGDLLKSQKWLEVYLEAEKQMKMFKSCLTTQEIFNQHKSTCQGLTYRRIPIPDFCAPKEQDFDRLLEAMKSALAEDSQTAFVFNCASGRGRTTTAMVIAVLTLWHFNGIPEMSEEEIVSVPDAKYTKGEFEVVMKVVQLLPDGHRMKKEVDMALDTVSETMTPMHYHLREIIICTYRQGRSGKDEQERRLLRLRSLQYLERYIYLILFNSYLHLEKKDSWQRPFSLWMREVAAVAGVYEVLDGLGFPELEQLEDEEPLRKLRGRWRAQSGAGWPSRGDLV.

G2 is lipidated: N-myristoyl glycine.

The protein belongs to the paladin family.

The protein localises to the cytoplasm. The protein resides in the cytosol. This is Paladin (PALD1) from Gallus gallus (Chicken).